The sequence spans 304 residues: MTQKIKCALIGPGNIGTDLLYKLKRSPFLEPVWMIGIDPESEGLKRAAEMGLKTCATGVDGFLPHVLEDNVQIAFDATSAYVHAENSRKLNALGVLMIDLTPAAIGPFCVPPVNLKEHVGRREMNVNMVTCGGQATIPMVAAVSRVQPVAYGEIVATVSSKSAGPGTRKNIDEFTRTTAGAVEKVGGAKKGKAIIIINPAEPPLVMRDTVHCLTETAPDQAAITESIHAMIKEVQKYVPGYRLVNGPVFDGNRVSVYMEVTGLGDFLPTYAGNLDIMTAAGARTAEMFAEEMIKGTLKLEPVHA.

The active-site Acyl-thioester intermediate is the Cys-131. Residues 162 to 170 and Asn-273 contribute to the NAD(+) site; that span reads SAGPGTRKN.

The protein belongs to the acetaldehyde dehydrogenase family.

The catalysed reaction is acetaldehyde + NAD(+) + CoA = acetyl-CoA + NADH + H(+). The protein is Acetaldehyde dehydrogenase 4 of Dechloromonas aromatica (strain RCB).